A 278-amino-acid chain; its full sequence is Adenosylcobinamide-GDP ribazoletransferase (278 aa).

Helical transmembrane passes span 31-51, 66-86, 115-135, 148-168, 187-207, 215-237, and 247-267; these read AMALAPFVGLALGLLAGSAVF, TLLPAVVGVTVLALVTRGLHL, TIGAFGAIIVLFVVLLQVGAL, ILVAAMTSRLAATLACTGAVP, DAALSFLAVCAVAALAGLLDF, ALRAVLAVWVGTGVSFLLRRYLL, and ILGGLIEITAAATLLVMAMTI.

It belongs to the CobS family. Mg(2+) is required as a cofactor.

It localises to the cell membrane. The catalysed reaction is alpha-ribazole + adenosylcob(III)inamide-GDP = adenosylcob(III)alamin + GMP + H(+). It catalyses the reaction alpha-ribazole 5'-phosphate + adenosylcob(III)inamide-GDP = adenosylcob(III)alamin 5'-phosphate + GMP + H(+). The protein operates within cofactor biosynthesis; adenosylcobalamin biosynthesis; adenosylcobalamin from cob(II)yrinate a,c-diamide: step 7/7. Its function is as follows. Joins adenosylcobinamide-GDP and alpha-ribazole to generate adenosylcobalamin (Ado-cobalamin). Also synthesizes adenosylcobalamin 5'-phosphate from adenosylcobinamide-GDP and alpha-ribazole 5'-phosphate. This Frankia casuarinae (strain DSM 45818 / CECT 9043 / HFP020203 / CcI3) protein is Adenosylcobinamide-GDP ribazoletransferase.